The following is a 77-amino-acid chain: uncharacterized protein (77 aa).

Polar residues predominate over residues 1 to 15; that stretch reads MNRTSESVEPQQNEK. 2 disordered regions span residues 1 to 20 and 31 to 52; these read MNRT…AVHW and TYSN…QRTF. A compositionally biased stretch (acidic residues) spans 33-44; it reads SNEDDEDNEEGD.

This is an uncharacterized protein from Schizosaccharomyces pombe (strain 972 / ATCC 24843) (Fission yeast).